The primary structure comprises 449 residues: Exodeoxyribonuclease 7 large subunit (449 aa).

It belongs to the XseA family. Heterooligomer composed of large and small subunits.

It localises to the cytoplasm. The enzyme catalyses Exonucleolytic cleavage in either 5'- to 3'- or 3'- to 5'-direction to yield nucleoside 5'-phosphates.. Its function is as follows. Bidirectionally degrades single-stranded DNA into large acid-insoluble oligonucleotides, which are then degraded further into small acid-soluble oligonucleotides. The polypeptide is Exodeoxyribonuclease 7 large subunit (Lacticaseibacillus paracasei (strain ATCC 334 / BCRC 17002 / CCUG 31169 / CIP 107868 / KCTC 3260 / NRRL B-441) (Lactobacillus paracasei)).